An 86-amino-acid chain; its full sequence is RNA-binding protein Hfq (86 aa).

The Sm domain maps to aspartate 9–valine 68. Residues proline 67 to alanine 86 are disordered. A compositionally biased stretch (basic and acidic residues) spans aspartate 75–alanine 86.

It belongs to the Hfq family. In terms of assembly, homohexamer.

RNA chaperone that binds small regulatory RNA (sRNAs) and mRNAs to facilitate mRNA translational regulation in response to envelope stress, environmental stress and changes in metabolite concentrations. Also binds with high specificity to tRNAs. This chain is RNA-binding protein Hfq, found in Pseudomonas putida (strain GB-1).